Reading from the N-terminus, the 60-residue chain is Putative SERF-like protein (60 aa).

A compositionally biased stretch (basic and acidic residues) spans 1–53 (MTRGNQRDLARQKNQKKQADLTKGKRTDNLTVEQRKARDAELMREKQKKKEEA). The tract at residues 1 to 60 (MTRGNQRDLARQKNQKKQADLTKGKRTDNLTVEQRKARDAELMREKQKKKEEAAAAGTSK) is disordered.

Belongs to the SERF family.

This Drosophila melanogaster (Fruit fly) protein is Putative SERF-like protein.